We begin with the raw amino-acid sequence, 236 residues long: uncharacterized protein (236 aa).

The disordered stretch occupies residues 1–29 (MNNEKNKQDRENLNRQDERKSSEIKSERK).

This is an uncharacterized protein from Staphylococcus aureus.